We begin with the raw amino-acid sequence, 77 residues long: U11-lycotoxin-Ls1a (77 aa).

An N-terminal signal peptide occupies residues 1–20 (MKLIILTGLVLFAIVSFIEA). A propeptide spanning residues 21–26 (EEETGR) is cleaved from the precursor.

Belongs to the neurotoxin 19 (CSTX) family. 10 (U11-Lctx) subfamily. Post-translationally, contains 4 disulfide bonds. As to expression, expressed by the venom gland.

Its subcellular location is the secreted. The protein is U11-lycotoxin-Ls1a of Lycosa singoriensis (Wolf spider).